A 508-amino-acid polypeptide reads, in one-letter code: Photosystem II CP47 reaction center protein (508 aa).

Helical transmembrane passes span 21–36, 101–115, 140–156, 203–218, 237–252, and 457–472; these read AVHLMHTALVSGWAGS, IVLSGLLFLAAIWHW, GIHLFLSGVLCFGFGAF, IAAGILGILAGLFHLS, VLSSSIAAVFFAAFVV, and CFALLFFFGHLWHGSR.

The protein belongs to the PsbB/PsbC family. PsbB subfamily. In terms of assembly, PSII is composed of 1 copy each of membrane proteins PsbA, PsbB, PsbC, PsbD, PsbE, PsbF, PsbH, PsbI, PsbJ, PsbK, PsbL, PsbM, PsbT, PsbX, PsbY, PsbZ, Psb30/Ycf12, at least 3 peripheral proteins of the oxygen-evolving complex and a large number of cofactors. It forms dimeric complexes. Binds multiple chlorophylls. PSII binds additional chlorophylls, carotenoids and specific lipids. is required as a cofactor.

It is found in the plastid. It localises to the chloroplast thylakoid membrane. Functionally, one of the components of the core complex of photosystem II (PSII). It binds chlorophyll and helps catalyze the primary light-induced photochemical processes of PSII. PSII is a light-driven water:plastoquinone oxidoreductase, using light energy to abstract electrons from H(2)O, generating O(2) and a proton gradient subsequently used for ATP formation. In Zygnema circumcarinatum (Green alga), this protein is Photosystem II CP47 reaction center protein.